The sequence spans 1081 residues: FHF complex subunit HOOK-interacting protein 1A (1081 aa).

Disordered stretches follow at residues 474–496, 544–623, 658–770, and 863–883; these read SEEQ…PPPA, PETF…DPPK, EKDT…ENEP, and EAGS…RHPV. A compositionally biased stretch (pro residues) spans 486–496; it reads PSSPSPPPPPA. Positions 553–564 are enriched in basic and acidic residues; that stretch reads EESRENSGHPEA. Polar residues predominate over residues 567–576; that stretch reads PQQSVRTSGQ. Positions 680 to 707 are enriched in acidic residues; the sequence is EPLEDTSEQQEDTSEQLEDTSELQEDTA. Polar residues-rich tracts occupy residues 727-738 and 746-762; these read EAQSLPTSNGPL and ESQP…NTFS.

This sequence belongs to the FHIP family. May be a component of the FTS/Hook/FHIP complex (FHF complex), composed of AKTIP/FTS, FHIP1B, and one or more members of the Hook family of proteins HOOK1, HOOK2, and HOOK3. May interact directly with AKTIP/FTS.

Functionally, probable component of the FTS/Hook/FHIP complex (FHF complex). FHF complex promotes the distribution of AP-4 complex to the perinuclear area of the cell. This Mus musculus (Mouse) protein is FHF complex subunit HOOK-interacting protein 1A.